The following is a 388-amino-acid chain: F-box/LRR-repeat protein At3g59190 (388 aa).

The F-box domain occupies 11–64 (KDIISNLPDALLCHVLSFLPTTEAASTSVLAKRWRFLLAFVPNLDLDNMIYDRP). LRR repeat units follow at residues 151–177 (KVSG…HLSA), 180–205 (FGDE…VMIK), 228–252 (CENI…EFTD), 313–345 (TMYL…TVET), and 346–371 (DERV…IFEV).

The chain is F-box/LRR-repeat protein At3g59190 from Arabidopsis thaliana (Mouse-ear cress).